A 517-amino-acid polypeptide reads, in one-letter code: Cytochrome P450 monooxygenase ausI (517 aa).

A helical membrane pass occupies residues 8–28; the sequence is LAPLGQPWIAGLVVVSAVLYL. Heme is bound at residue cysteine 457.

It belongs to the cytochrome P450 family. Heme serves as cofactor.

Its subcellular location is the membrane. It participates in secondary metabolite biosynthesis; terpenoid biosynthesis. Functionally, cytochrome P450 monooxygenase; part of the gene cluster that mediates the biosynthesis of calidodehydroaustin, a fungal meroterpenoid. The first step of the pathway is the synthesis of 3,5-dimethylorsellinic acid by the polyketide synthase ausA. 3,5-dimethylorsellinic acid is then prenylated by the polyprenyl transferase ausN. Further epoxidation by the FAD-dependent monooxygenase ausM and cyclization by the probable terpene cyclase ausL lead to the formation of protoaustinoid A. Protoaustinoid A is then oxidized to spiro-lactone preaustinoid A3 by the combined action of the FAD-binding monooxygenases ausB and ausC, and the dioxygenase ausE. Acid-catalyzed keto-rearrangement and ring contraction of the tetraketide portion of preaustinoid A3 by ausJ lead to the formation of preaustinoid A4. The aldo-keto reductase ausK, with the help of ausH, is involved in the next step by transforming preaustinoid A4 into isoaustinone which is in turn hydroxylated by the P450 monooxygenase ausI to form austinolide. The cytochrome P450 monooxygenase ausG modifies austinolide to austinol. Austinol is further acetylated to austin by the O-acetyltransferase ausP, which spontaneously changes to dehydroaustin. The cytochrome P450 monooxygenase ausR then converts dehydroaustin is into 7-dehydrodehydroaustin. The hydroxylation catalyzed by ausR permits the O-acetyltransferase ausQ to add an additional acetyl group to the molecule, leading to the formation of acetoxydehydroaustin. The short chain dehydrogenase ausT catalyzes the reduction of the double bond present between carbon atoms 1 and 2 to convert 7-dehydrodehydroaustin into 1,2-dihydro-7-hydroxydehydroaustin. AusQ catalyzes not only an acetylation reaction but also the addition of the PKS ausV diketide product to 1,2-dihydro-7-hydroxydehydroaustin, forming precalidodehydroaustin. Finally, the iron/alpha-ketoglutarate-dependent dioxygenase converts precalidodehydroaustin into calidodehydroaustin. This is Cytochrome P450 monooxygenase ausI from Aspergillus calidoustus.